Reading from the N-terminus, the 78-residue chain is Protein M6 (78 aa).

This sequence belongs to the A9/FIL1 family. Tapetum of anthers.

The protein localises to the secreted. The sequence is that of Protein M6 (M6) from Lilium henryi (Henry's lily).